The primary structure comprises 158 residues: Ribosome maturation factor RimP (158 aa).

Belongs to the RimP family.

Its subcellular location is the cytoplasm. In terms of biological role, required for maturation of 30S ribosomal subunits. This chain is Ribosome maturation factor RimP, found in Pseudomonas fluorescens (strain ATCC BAA-477 / NRRL B-23932 / Pf-5).